An 89-amino-acid chain; its full sequence is Large ribosomal subunit protein bL27 (89 aa).

Positions 1 to 24 (MAHKKGTGSTRNGRDSNAKRLGVK) are disordered.

The protein belongs to the bacterial ribosomal protein bL27 family.

This Synechococcus sp. (strain JA-2-3B'a(2-13)) (Cyanobacteria bacterium Yellowstone B-Prime) protein is Large ribosomal subunit protein bL27.